Consider the following 278-residue polypeptide: Large ribosomal subunit protein uL2 (278 aa).

Disordered stretches follow at residues 1–58 (MAIR…GGGH) and 225–278 (VMNP…KNKR). Over residues 37–58 (LHGRGGRNAHGRITTRHKGGGH) the composition is skewed to basic residues. Basic and acidic residues predominate over residues 253-267 (PEGRTRKNKASDKLI). The span at 268–278 (VRRRRTGKNKR) shows a compositional bias: basic residues.

It belongs to the universal ribosomal protein uL2 family. In terms of assembly, part of the 50S ribosomal subunit. Forms a bridge to the 30S subunit in the 70S ribosome.

In terms of biological role, one of the primary rRNA binding proteins. Required for association of the 30S and 50S subunits to form the 70S ribosome, for tRNA binding and peptide bond formation. It has been suggested to have peptidyltransferase activity; this is somewhat controversial. Makes several contacts with the 16S rRNA in the 70S ribosome. The protein is Large ribosomal subunit protein uL2 of Rhodococcus opacus (strain B4).